Consider the following 252-residue polypeptide: 3-dehydroquinate dehydratase (252 aa).

3-dehydroquinate-binding positions include Ser-21, 46-48 (EWR), and Arg-82. The active-site Proton donor/acceptor is the His-143. Lys-170 (schiff-base intermediate with substrate) is an active-site residue. 3-dehydroquinate is bound by residues Arg-213, Ser-232, and Gln-236.

It belongs to the type-I 3-dehydroquinase family. As to quaternary structure, homodimer.

It catalyses the reaction 3-dehydroquinate = 3-dehydroshikimate + H2O. The protein operates within metabolic intermediate biosynthesis; chorismate biosynthesis; chorismate from D-erythrose 4-phosphate and phosphoenolpyruvate: step 3/7. Its function is as follows. Involved in the third step of the chorismate pathway, which leads to the biosynthesis of aromatic amino acids. Catalyzes the cis-dehydration of 3-dehydroquinate (DHQ) and introduces the first double bond of the aromatic ring to yield 3-dehydroshikimate. The polypeptide is 3-dehydroquinate dehydratase (Escherichia coli (strain SE11)).